Here is a 341-residue protein sequence, read N- to C-terminus: MATIKDVAKRANVSTTTVSHVINKTRFVAEETRNAVWAAIKELHYSPSAVARSLKVNHTKSIGLLATSSEAAYFAEIIEAVEKNCFQKGYTLILGNAWNNLEKQRAYLSMMAQKRVDGLLVMCSEYPEPLLAMLEEYRHIPMVVMDWGEAKADFTDAVIDNAFEGGYMAGRYLIERGHREIGVIPGPLERNTGAGRLAGFMKAMEEAMIKVPESWIVQGDFEPESGYRAMQQILSQSHRPTAVFCGGDIMAMGALCAADEMGLRVPQDVSLIGYDNVRNARYFTPALTTIHQPKDSLGETAFNMLLDRIVNKREEPQSIEVHPRLIERRSVADGPFRDYRR.

One can recognise an HTH lacI-type domain in the interval 2-56 (ATIKDVAKRANVSTTTVSHVINKTRFVAEETRNAVWAAIKELHYSPSAVARSLKV). Residues 4 to 23 (IKDVAKRANVSTTTVSHVIN) constitute a DNA-binding region (H-T-H motif). Residues 48–56 (SAVARSLKV) mediate DNA binding. Residues Y73, R190, T192, F221, and D275 each coordinate hypoxanthine.

As to quaternary structure, homodimer.

The protein operates within purine metabolism; purine nucleotide biosynthesis [regulation]. Functionally, is the main repressor of the genes involved in the de novo synthesis of purine nucleotides, regulating purB, purC, purEK, purF, purHD, purL, purMN and guaBA expression. PurR is allosterically activated to bind its cognate DNA by binding the purine corepressors, hypoxanthine or guanine, thereby effecting transcription repression. This is HTH-type transcriptional repressor PurR from Escherichia coli (strain UTI89 / UPEC).